The primary structure comprises 185 residues: Ribosome-recycling factor (185 aa).

The protein belongs to the RRF family.

It localises to the cytoplasm. Functionally, responsible for the release of ribosomes from messenger RNA at the termination of protein biosynthesis. May increase the efficiency of translation by recycling ribosomes from one round of translation to another. The polypeptide is Ribosome-recycling factor (Neisseria gonorrhoeae (strain ATCC 700825 / FA 1090)).